A 385-amino-acid chain; its full sequence is ATP phosphoribosyltransferase regulatory subunit (385 aa).

Belongs to the class-II aminoacyl-tRNA synthetase family. HisZ subfamily. Heteromultimer composed of HisG and HisZ subunits.

It localises to the cytoplasm. Its pathway is amino-acid biosynthesis; L-histidine biosynthesis; L-histidine from 5-phospho-alpha-D-ribose 1-diphosphate: step 1/9. In terms of biological role, required for the first step of histidine biosynthesis. May allow the feedback regulation of ATP phosphoribosyltransferase activity by histidine. The protein is ATP phosphoribosyltransferase regulatory subunit of Lysinibacillus sphaericus (strain C3-41).